The chain runs to 126 residues: Fluoride-specific ion channel FluC (126 aa).

4 consecutive transmembrane segments (helical) span residues 2-22, 37-57, 65-85, and 101-121; these read LTFA…GAWL, WGTL…VALI, AWIR…FSTF, and AAAY…LATV. Residues Gly-77 and Thr-80 each contribute to the Na(+) site.

Belongs to the fluoride channel Fluc/FEX (TC 1.A.43) family.

It localises to the cell inner membrane. It carries out the reaction fluoride(in) = fluoride(out). Na(+) is not transported, but it plays an essential structural role and its presence is essential for fluoride channel function. Its function is as follows. Fluoride-specific ion channel. Important for reducing fluoride concentration in the cell, thus reducing its toxicity. This Bordetella parapertussis (strain 12822 / ATCC BAA-587 / NCTC 13253) protein is Fluoride-specific ion channel FluC.